The chain runs to 954 residues: Glycine dehydrogenase (decarboxylating) (954 aa).

N6-(pyridoxal phosphate)lysine is present on lysine 700.

Belongs to the GcvP family. The glycine cleavage system is composed of four proteins: P, T, L and H. Requires pyridoxal 5'-phosphate as cofactor.

It carries out the reaction N(6)-[(R)-lipoyl]-L-lysyl-[glycine-cleavage complex H protein] + glycine + H(+) = N(6)-[(R)-S(8)-aminomethyldihydrolipoyl]-L-lysyl-[glycine-cleavage complex H protein] + CO2. Its function is as follows. The glycine cleavage system catalyzes the degradation of glycine. The P protein binds the alpha-amino group of glycine through its pyridoxal phosphate cofactor; CO(2) is released and the remaining methylamine moiety is then transferred to the lipoamide cofactor of the H protein. The polypeptide is Glycine dehydrogenase (decarboxylating) (Dinoroseobacter shibae (strain DSM 16493 / NCIMB 14021 / DFL 12)).